The chain runs to 293 residues: MISGIINLKKEAGMTSHDAVFKLRKILHEKKIGHGGTLDPDVTGVLPIAVGKATRVIEYMTEAGKVYEGEITIGFSTTTEDASGEVVQTTPITELDGATVDQAMASFEGEITQIPPMYSAVKINGKKLYEYARAGEEVERPQRQVKITEFVRTSPIELENGTARFTFRVACSKGTYVRTLSVDLGVKLGFASHMSALRRTASAGLTLDSSLSLSQISEMVEAGDQSFLLPIEFGVQDLPAVQVTEDDAKEISFGRFISINSQEPLVAAFLGDKVLAIMEKRGQVYKPRKVLSQ.

Asp-39 functions as the Nucleophile in the catalytic mechanism.

Belongs to the pseudouridine synthase TruB family. Type 1 subfamily.

The catalysed reaction is uridine(55) in tRNA = pseudouridine(55) in tRNA. Its function is as follows. Responsible for synthesis of pseudouridine from uracil-55 in the psi GC loop of transfer RNAs. The chain is tRNA pseudouridine synthase B from Streptococcus thermophilus (strain ATCC BAA-250 / LMG 18311).